Here is a 118-residue protein sequence, read N- to C-terminus: Large ribosomal subunit protein uL18 (118 aa).

The segment at 1 to 24 is disordered; sequence MISKPDKNKTRQRRHARVRGKISG. A compositionally biased stretch (basic residues) spans 10-20; it reads TRQRRHARVRG.

Belongs to the universal ribosomal protein uL18 family. In terms of assembly, part of the 50S ribosomal subunit; part of the 5S rRNA/L5/L18/L25 subcomplex. Contacts the 5S and 23S rRNAs.

In terms of biological role, this is one of the proteins that bind and probably mediate the attachment of the 5S RNA into the large ribosomal subunit, where it forms part of the central protuberance. This Lactiplantibacillus plantarum (strain ATCC BAA-793 / NCIMB 8826 / WCFS1) (Lactobacillus plantarum) protein is Large ribosomal subunit protein uL18.